The following is a 290-amino-acid chain: Zinc-finger homeodomain protein 2 (290 aa).

Residues 1-15 show a composition bias toward acidic residues; it reads MDFDDHDEGDGDEEM. The interval 1-59 is disordered; the sequence is MDFDDHDEGDGDEEMPPMPLSSGYDAPMQPGLGGGGGGVPKPGGGVGGGGGGGGGGGGG. The span at 31-59 shows a compositional bias: gly residues; sequence GLGGGGGGVPKPGGGVGGGGGGGGGGGGG. Residues 63-112 form a ZF-HD dimerization-type; degenerate zinc finger; the sequence is YRECLKNHAVGIGGHAVDGCGEFMASGEEGSIDALRCAACGCHRNFHRKE. A DNA-binding region (homeobox) is located at residues 226–289; it reads KKRFRTKFTQ…NNKHTLGKKA (64 aa).

Homo- and heterodimer with other ZFHD proteins.

It localises to the nucleus. Functionally, putative transcription factor. The polypeptide is Zinc-finger homeodomain protein 2 (ZHD2) (Oryza sativa subsp. japonica (Rice)).